Here is an 898-residue protein sequence, read N- to C-terminus: Dipeptidyl peptidase 8 (898 aa).

Residues Ser755, Asp833, and His865 each act as charge relay system in the active site.

This sequence belongs to the peptidase S9B family. DPPIV subfamily. As to quaternary structure, homodimer. Forms a ternary complex with NLRP1, composed of a DPP8 homodimer, one full-length NLRP1 protein, and one cleaved C-terminus of NLRP1 (NACHT, LRR and PYD domains-containing protein 1, C-terminus). Forms a ternary complex with CARD8, composed of a DPP8 homodimer, one full-length NLRP1 protein, and one cleaved C-terminus of CARD8 (Caspase recruitment domain-containing protein 8, C-terminus). In the ternary complex, only one subunit of the DPP8 homodimer is bound to NLRP1 or CARD8. Ubiquitously expressed, with highest levels in testis, placenta, prostate, muscle and brain.

It localises to the cytoplasm. It catalyses the reaction Release of an N-terminal dipeptide, Xaa-Yaa-|-Zaa-, from a polypeptide, preferentially when Yaa is Pro, provided Zaa is neither Pro nor hydroxyproline.. With respect to regulation, inhibited by zinc. Inhibited by the serine proteinase inhibitor 4-(2-aminoethyl)benzenesulphonyl fluoride (AEBSF), and by di-isopropylfluorophosphate. Specifically inhibited by isoindoline derivatives. Inhibited by Val-boroPro (Talabostat, PT-100), a non-selective inhibitor, which triggers pyroptosis in monocytes and macrophages. Functionally, dipeptidyl peptidase that cleaves off N-terminal dipeptides from proteins having a Pro or Ala residue at position 2. Acts as a key inhibitor of caspase-1-dependent monocyte and macrophage pyroptosis in resting cells by preventing activation of NLRP1 and CARD8. Sequesters the cleaved C-terminal part of NLRP1 and CARD8, which respectively constitute the active part of the NLRP1 and CARD8 inflammasomes, in a ternary complex, thereby preventing their oligomerization and activation. The dipeptidyl peptidase activity is required to suppress NLRP1 and CARD8; however, neither NLRP1 nor CARD8 are bona fide substrates of DPP8, suggesting the existence of substrate(s) required for NLRP1 and CARD8 inhibition. This is Dipeptidyl peptidase 8 from Homo sapiens (Human).